Here is a 208-residue protein sequence, read N- to C-terminus: uncharacterized protein (208 aa).

This is an uncharacterized protein from Ureaplasma parvum serovar 3 (strain ATCC 700970).